Here is a 509-residue protein sequence, read N- to C-terminus: Galactose-1-phosphate uridylyltransferase (509 aa).

It belongs to the galactose-1-phosphate uridylyltransferase type 2 family.

It localises to the cytoplasm. The catalysed reaction is alpha-D-galactose 1-phosphate + UDP-alpha-D-glucose = alpha-D-glucose 1-phosphate + UDP-alpha-D-galactose. The protein operates within carbohydrate metabolism; galactose metabolism. This chain is Galactose-1-phosphate uridylyltransferase, found in Fusobacterium nucleatum subsp. nucleatum (strain ATCC 25586 / DSM 15643 / BCRC 10681 / CIP 101130 / JCM 8532 / KCTC 2640 / LMG 13131 / VPI 4355).